Here is a 388-residue protein sequence, read N- to C-terminus: LL-diaminopimelate aminotransferase (388 aa).

The substrate site is built by Tyr16 and Gly41. Residues Tyr70, 104–105, Tyr129, Asn179, Tyr210, and 239–241 contribute to the pyridoxal 5'-phosphate site; these read SK and SLS. 3 residues coordinate substrate: Lys105, Tyr129, and Asn179. Lys242 carries the N6-(pyridoxal phosphate)lysine modification. Arg250 lines the pyridoxal 5'-phosphate pocket. Arg368 is a substrate binding site.

It belongs to the class-I pyridoxal-phosphate-dependent aminotransferase family. LL-diaminopimelate aminotransferase subfamily. In terms of assembly, homodimer. It depends on pyridoxal 5'-phosphate as a cofactor.

The enzyme catalyses (2S,6S)-2,6-diaminopimelate + 2-oxoglutarate = (S)-2,3,4,5-tetrahydrodipicolinate + L-glutamate + H2O + H(+). It functions in the pathway amino-acid biosynthesis; L-lysine biosynthesis via DAP pathway; LL-2,6-diaminopimelate from (S)-tetrahydrodipicolinate (aminotransferase route): step 1/1. Its function is as follows. Involved in the synthesis of meso-diaminopimelate (m-DAP or DL-DAP), required for both lysine and peptidoglycan biosynthesis. Catalyzes the direct conversion of tetrahydrodipicolinate to LL-diaminopimelate. In Maridesulfovibrio salexigens (strain ATCC 14822 / DSM 2638 / NCIMB 8403 / VKM B-1763) (Desulfovibrio salexigens), this protein is LL-diaminopimelate aminotransferase.